The primary structure comprises 184 residues: MLQQLLSNAFTMVLIILVINIVYVSFSTMRLILTMKGRRYAAAFAGTIEMLIYVIGLSIVLDNLDQIQNVIAYALGYGMGIIVGMKIEEKLALGYTTVNVITKELDVDLPRQLREKGYGVTSWVAGGLEGDRTALQILTPRKYELQLYETIKTLDSKAFIISYEPKSIHGGFWVKAVKKRRIKE.

The next 3 membrane-spanning stretches (helical) occupy residues 9 to 29 (AFTM…FSTM), 41 to 61 (AAAF…SIVL), and 67 to 87 (IQNV…GMKI).

Belongs to the UPF0316 family.

Its subcellular location is the cell membrane. The polypeptide is UPF0316 protein BPUM_0594 (Bacillus pumilus (strain SAFR-032)).